Here is a 579-residue protein sequence, read N- to C-terminus: Arginine--tRNA ligase (579 aa).

The 'HIGH' region signature appears at 127–137; that stretch reads PNLAKEMHVGH.

It belongs to the class-I aminoacyl-tRNA synthetase family. In terms of assembly, monomer.

The protein resides in the cytoplasm. It catalyses the reaction tRNA(Arg) + L-arginine + ATP = L-arginyl-tRNA(Arg) + AMP + diphosphate. The chain is Arginine--tRNA ligase from Stutzerimonas stutzeri (strain A1501) (Pseudomonas stutzeri).